Consider the following 503-residue polypeptide: Maturase K (503 aa).

The protein belongs to the intron maturase 2 family. MatK subfamily.

Its subcellular location is the plastid. The protein localises to the chloroplast. Usually encoded in the trnK tRNA gene intron. Probably assists in splicing its own and other chloroplast group II introns. The polypeptide is Maturase K (Kunzea baxteri (Scarlet kunzea)).